The following is a 792-amino-acid chain: X-ray radiation resistance-associated protein 1 (792 aa).

LRR repeat units follow at residues 104–125, 141–155, 164–184, 188–209, 229–250, and 254–275; these read DLCTINAKENDFKHFHSVIYIN, ALKELDLAFNGIKTI, LLEFLDLSFNSLTVEAICDLG, HLRVLLLTGNGLTSLPPNLAVA, ALETLMLDDNRLSNPSCFASLA, and RLKKLSLDENRIIRIPYLQQVQ. Disordered stretches follow at residues 490–517, 537–562, and 577–601; these read AEDLPTTKSTSVESEMPTENLEGHSPSC, TLSHLSDTTVRLSPERPSDEDSKSTE, and IHKDDLELKEKDQKKPPTAPREVKG. The span at 549–560 shows a compositional bias: basic and acidic residues; it reads SPERPSDEDSKS. A coiled-coil region spans residues 723-745; the sequence is HKQYLEAKRLLKEFQARYRQLVS.

Expressed predominantly in testis followed by prostate and ovary. Low levels found in other tissues including peripheral blood leukocytes, spleen, thymus, small intestine and colon. Also expressed in neuroblastoma, glioma, breast, lung, leukemia, renal, ovarian, prostate and colorectal cancer cell lines.

The protein localises to the cytoplasm. It localises to the nucleus. Functionally, may be involved in the response of cells to X-ray radiation. The polypeptide is X-ray radiation resistance-associated protein 1 (Homo sapiens (Human)).